Reading from the N-terminus, the 129-residue chain is uncharacterized protein (129 aa).

The protein localises to the cytoplasm. Its subcellular location is the cytosol. It is found in the nucleus. This is an uncharacterized protein from Schizosaccharomyces pombe (strain 972 / ATCC 24843) (Fission yeast).